Here is a 458-residue protein sequence, read N- to C-terminus: tRNA-2-methylthio-N(6)-dimethylallyladenosine synthase (458 aa).

In terms of domain architecture, MTTase N-terminal spans 15-134; the sequence is KKVFIKTYGC…LPDLLEQTKQ (120 aa). Cys-24, Cys-60, Cys-97, Cys-175, Cys-179, and Cys-182 together coordinate [4Fe-4S] cluster. The 233-residue stretch at 161–393 folds into the Radical SAM core domain; the sequence is RKRGVSAFLT…QVLLLEQQNA (233 aa). The TRAM domain maps to 396–457; it reads RSKIGQTTDV…SNSFVGEIAN (62 aa).

The protein belongs to the methylthiotransferase family. MiaB subfamily. In terms of assembly, monomer. [4Fe-4S] cluster serves as cofactor.

It localises to the cytoplasm. It catalyses the reaction N(6)-dimethylallyladenosine(37) in tRNA + (sulfur carrier)-SH + AH2 + 2 S-adenosyl-L-methionine = 2-methylsulfanyl-N(6)-dimethylallyladenosine(37) in tRNA + (sulfur carrier)-H + 5'-deoxyadenosine + L-methionine + A + S-adenosyl-L-homocysteine + 2 H(+). In terms of biological role, catalyzes the methylthiolation of N6-(dimethylallyl)adenosine (i(6)A), leading to the formation of 2-methylthio-N6-(dimethylallyl)adenosine (ms(2)i(6)A) at position 37 in tRNAs that read codons beginning with uridine. The protein is tRNA-2-methylthio-N(6)-dimethylallyladenosine synthase of Bartonella quintana (strain Toulouse) (Rochalimaea quintana).